Reading from the N-terminus, the 294-residue chain is 33 kDa chaperonin (294 aa).

2 disulfide bridges follow: cysteine 231–cysteine 233 and cysteine 264–cysteine 267.

It belongs to the HSP33 family. Under oxidizing conditions two disulfide bonds are formed involving the reactive cysteines. Under reducing conditions zinc is bound to the reactive cysteines and the protein is inactive.

The protein resides in the cytoplasm. Functionally, redox regulated molecular chaperone. Protects both thermally unfolding and oxidatively damaged proteins from irreversible aggregation. Plays an important role in the bacterial defense system toward oxidative stress. In Aeromonas salmonicida (strain A449), this protein is 33 kDa chaperonin.